The following is a 1342-amino-acid chain: DNA-directed RNA polymerase subunit beta (1342 aa).

Belongs to the RNA polymerase beta chain family. The RNAP catalytic core consists of 2 alpha, 1 beta, 1 beta' and 1 omega subunit. When a sigma factor is associated with the core the holoenzyme is formed, which can initiate transcription.

It catalyses the reaction RNA(n) + a ribonucleoside 5'-triphosphate = RNA(n+1) + diphosphate. In terms of biological role, DNA-dependent RNA polymerase catalyzes the transcription of DNA into RNA using the four ribonucleoside triphosphates as substrates. In Shewanella amazonensis (strain ATCC BAA-1098 / SB2B), this protein is DNA-directed RNA polymerase subunit beta.